The following is a 97-amino-acid chain: Citrate lyase acyl carrier protein (97 aa).

Position 14 is an O-(phosphoribosyl dephospho-coenzyme A)serine (serine 14).

It belongs to the CitD family. As to quaternary structure, oligomer with a subunit composition of (alpha,beta,gamma)6.

The protein resides in the cytoplasm. Its function is as follows. Covalent carrier of the coenzyme of citrate lyase. The sequence is that of Citrate lyase acyl carrier protein from Escherichia fergusonii (strain ATCC 35469 / DSM 13698 / CCUG 18766 / IAM 14443 / JCM 21226 / LMG 7866 / NBRC 102419 / NCTC 12128 / CDC 0568-73).